Consider the following 469-residue polypeptide: Glutamate--tRNA ligase (469 aa).

Residues 11–21 carry the 'HIGH' region motif; it reads PSPTGFIHLGN. The 'KMSKS' region motif lies at 243–247; sequence KMSKR. Lys-246 contacts ATP.

It belongs to the class-I aminoacyl-tRNA synthetase family. Glutamate--tRNA ligase type 1 subfamily. Monomer.

Its subcellular location is the cytoplasm. It carries out the reaction tRNA(Glu) + L-glutamate + ATP = L-glutamyl-tRNA(Glu) + AMP + diphosphate. Its function is as follows. Catalyzes the attachment of glutamate to tRNA(Glu) in a two-step reaction: glutamate is first activated by ATP to form Glu-AMP and then transferred to the acceptor end of tRNA(Glu). The protein is Glutamate--tRNA ligase of Burkholderia orbicola (strain AU 1054).